A 350-amino-acid polypeptide reads, in one-letter code: Biotin synthase (350 aa).

The Radical SAM core domain maps to 38-256; it reads NHVQVSTLLS…IAIARIMMPQ (219 aa). 3 residues coordinate [4Fe-4S] cluster: Cys-53, Cys-57, and Cys-60. Residues Cys-97, Cys-128, Cys-188, and Arg-260 each contribute to the [2Fe-2S] cluster site.

It belongs to the radical SAM superfamily. Biotin synthase family. In terms of assembly, homodimer. Requires [4Fe-4S] cluster as cofactor. [2Fe-2S] cluster is required as a cofactor.

The catalysed reaction is (4R,5S)-dethiobiotin + (sulfur carrier)-SH + 2 reduced [2Fe-2S]-[ferredoxin] + 2 S-adenosyl-L-methionine = (sulfur carrier)-H + biotin + 2 5'-deoxyadenosine + 2 L-methionine + 2 oxidized [2Fe-2S]-[ferredoxin]. The protein operates within cofactor biosynthesis; biotin biosynthesis; biotin from 7,8-diaminononanoate: step 2/2. Catalyzes the conversion of dethiobiotin (DTB) to biotin by the insertion of a sulfur atom into dethiobiotin via a radical-based mechanism. The polypeptide is Biotin synthase (Vibrio parahaemolyticus serotype O3:K6 (strain RIMD 2210633)).